Consider the following 255-residue polypeptide: Hydroxyacylglutathione hydrolase (255 aa).

H56, H58, D60, H61, H114, D133, and H171 together coordinate Zn(2+).

It belongs to the metallo-beta-lactamase superfamily. Glyoxalase II family. As to quaternary structure, monomer. Zn(2+) is required as a cofactor.

It catalyses the reaction an S-(2-hydroxyacyl)glutathione + H2O = a 2-hydroxy carboxylate + glutathione + H(+). It participates in secondary metabolite metabolism; methylglyoxal degradation; (R)-lactate from methylglyoxal: step 2/2. Its function is as follows. Thiolesterase that catalyzes the hydrolysis of S-D-lactoyl-glutathione to form glutathione and D-lactic acid. The protein is Hydroxyacylglutathione hydrolase of Mesorhizobium japonicum (strain LMG 29417 / CECT 9101 / MAFF 303099) (Mesorhizobium loti (strain MAFF 303099)).